Reading from the N-terminus, the 397-residue chain is 3-ketoacyl-CoA thiolase, mitochondrial (397 aa).

The transit peptide at 1-16 directs the protein to the mitochondrion; not cleaved; it reads MALLRGVFVVAAKRTP. Lys-25 is subject to N6-acetyllysine; alternate. Lys-25 carries the N6-succinyllysine; alternate modification. Lys-45 carries the post-translational modification N6-succinyllysine. Cys-92 serves as the catalytic Acyl-thioester intermediate. Thr-119 is subject to Phosphothreonine. Ser-121 carries the post-translational modification Phosphoserine. Phosphotyrosine is present on Tyr-127. Thr-136 is subject to Phosphothreonine. N6-acetyllysine; alternate is present on Lys-137. Residue Lys-137 is modified to N6-succinyllysine; alternate. At Ser-140 the chain carries Phosphoserine. N6-acetyllysine; alternate occurs at positions 143, 171, 191, and 209. Residues Lys-143, Lys-171, Lys-191, and Lys-209 each carry the N6-succinyllysine; alternate modification. Lys-211, Lys-212, and Lys-214 each carry N6-succinyllysine. 2 residues coordinate CoA: Arg-224 and Thr-227. Lys-234 is subject to N6-acetyllysine; alternate. N6-succinyllysine; alternate is present on Lys-234. Lys-240 is modified (N6-succinyllysine). The residue at position 241 (Lys-241) is an N6-acetyllysine. A CoA-binding site is contributed by Ser-251. 2 positions are modified to N6-acetyllysine: Lys-269 and Lys-270. At Lys-305 the chain carries N6-acetyllysine; alternate. Residue Lys-305 is modified to N6-succinyllysine; alternate. Ser-310 is modified (phosphoserine). Lys-312 carries the post-translational modification N6-acetyllysine; alternate. At Lys-312 the chain carries N6-succinyllysine; alternate. Position 333 is a phosphoserine (Ser-333). Residues Lys-340 and Lys-375 each carry the N6-acetyllysine modification. Cys-382 acts as the Proton donor/acceptor in catalysis.

The protein belongs to the thiolase-like superfamily. Thiolase family. In terms of assembly, homotetramer. Interacts with BNIP3.

The protein resides in the mitochondrion. The enzyme catalyses an acyl-CoA + acetyl-CoA = a 3-oxoacyl-CoA + CoA. It carries out the reaction 2 acetyl-CoA = acetoacetyl-CoA + CoA. The catalysed reaction is acetyl-CoA + H2O = acetate + CoA + H(+). It catalyses the reaction propanoyl-CoA + H2O = propanoate + CoA + H(+). The enzyme catalyses butanoyl-CoA + H2O = butanoate + CoA + H(+). It carries out the reaction hexanoyl-CoA + H2O = hexanoate + CoA + H(+). The catalysed reaction is octanoyl-CoA + H2O = octanoate + CoA + H(+). It catalyses the reaction decanoyl-CoA + H2O = decanoate + CoA + H(+). The enzyme catalyses dodecanoyl-CoA + H2O = dodecanoate + CoA + H(+). It carries out the reaction tetradecanoyl-CoA + H2O = tetradecanoate + CoA + H(+). The catalysed reaction is hexadecanoyl-CoA + H2O = hexadecanoate + CoA + H(+). It functions in the pathway lipid metabolism; fatty acid beta-oxidation. In terms of biological role, in the production of energy from fats, this is one of the enzymes that catalyzes the last step of the mitochondrial beta-oxidation pathway, an aerobic process breaking down fatty acids into acetyl-CoA. Using free coenzyme A/CoA, catalyzes the thiolytic cleavage of medium- to long-chain unbranched 3-oxoacyl-CoAs into acetyl-CoA and a fatty acyl-CoA shortened by two carbon atoms. Also catalyzes the condensation of two acetyl-CoA molecules into acetoacetyl-CoA and could be involved in the production of ketone bodies. Also displays hydrolase activity on various fatty acyl-CoAs. Thereby, could be responsible for the production of acetate in a side reaction to beta-oxidation. Abolishes BNIP3-mediated apoptosis and mitochondrial damage. This Pongo abelii (Sumatran orangutan) protein is 3-ketoacyl-CoA thiolase, mitochondrial (ACAA2).